The chain runs to 152 residues: Male-specific protein scotti (152 aa).

The protein belongs to the male-specific scotti family.

Post-meiotically transcribed gene that has a role in late spermiogenesis; required for actin cone progression during spermatid individualization. This Drosophila mojavensis (Fruit fly) protein is Male-specific protein scotti.